A 361-amino-acid chain; its full sequence is Phosphoserine aminotransferase (361 aa).

S9 and R42 together coordinate L-glutamate. Pyridoxal 5'-phosphate contacts are provided by residues 76-77 (AR), W102, T153, D173, and Q196. An N6-(pyridoxal phosphate)lysine modification is found at K197. 238 to 239 (NT) contacts pyridoxal 5'-phosphate.

It belongs to the class-V pyridoxal-phosphate-dependent aminotransferase family. SerC subfamily. Homodimer. It depends on pyridoxal 5'-phosphate as a cofactor.

The protein resides in the cytoplasm. It carries out the reaction O-phospho-L-serine + 2-oxoglutarate = 3-phosphooxypyruvate + L-glutamate. It catalyses the reaction 4-(phosphooxy)-L-threonine + 2-oxoglutarate = (R)-3-hydroxy-2-oxo-4-phosphooxybutanoate + L-glutamate. The protein operates within amino-acid biosynthesis; L-serine biosynthesis; L-serine from 3-phospho-D-glycerate: step 2/3. It participates in cofactor biosynthesis; pyridoxine 5'-phosphate biosynthesis; pyridoxine 5'-phosphate from D-erythrose 4-phosphate: step 3/5. In terms of biological role, catalyzes the reversible conversion of 3-phosphohydroxypyruvate to phosphoserine and of 3-hydroxy-2-oxo-4-phosphonooxybutanoate to phosphohydroxythreonine. In Erwinia tasmaniensis (strain DSM 17950 / CFBP 7177 / CIP 109463 / NCPPB 4357 / Et1/99), this protein is Phosphoserine aminotransferase.